The following is a 588-amino-acid chain: MELLWTPLLLVAACLSEVLGSPEIDTGINISQPLHILEDHNLMVLTPAGLTQTLNETRFLMVIFHNPSLKQSRKLAKELGKAAEIFGKGKNGLGFGKVDITKETELQQEFDITHAPELKLFFEGNRLKPISCKDVVESTALVVWLRRQISKKALLFNNSDEVADFVKSRPLVIVGFFQDLEEEVAELFYDTIKDFPELTFGAIQIKNSFGRFHVILDSVLVFKKGKIVKRQELINDSTNKDHLNQVIKQQLTGFVIELNPENKDLIYELNILNHMLLFISKSSEPYSTISRHYRQIAKEFQNKILFVLVNADEPKNKRIFEYFQISRVNVPSVQILNLSSDGRYKMPTDDINFESLKKFCNSFLSKTAKKHKASEEIPKYWDQGPVKKLVGKNFNVVVLDKEKDVFVMFYAPWSEKCRVLLPLLEELGIKYQNHSTVIIAKIDITANDIQLANPEQYPFFRLFPTDSQEAVMYKGEHTMKGFCDFLESHVKVRIEEEDELLYIEQNEEEEVLAEPEIQLIEKLPENPLLKIEDTSKQDRPVKESPVLDSIRKPEEPERRKETAEREAAAAQPKEQPKPERKLEVKEEL.

The signal sequence occupies residues 1–20 (MELLWTPLLLVAACLSEVLG). N-linked (GlcNAc...) asparagine glycans are attached at residues N55, N157, and N337. Residues 385–448 (PVKKLVGKNF…IAKIDITAND (64 aa)) form the Thioredoxin domain. Basic and acidic residues-rich tracts occupy residues 531-542 (IEDTSKQDRPVK), 549-567 (SIRK…EREA), and 574-588 (EQPK…KEEL). The tract at residues 531–588 (IEDTSKQDRPVKESPVLDSIRKPEEPERRKETAEREAAAAQPKEQPKPERKLEVKEEL) is disordered. The short motif at 585 to 588 (KEEL) is the Prevents secretion from ER element.

The protein belongs to the protein disulfide isomerase family. In terms of assembly, homodimer. The homodimer is not disulfide-linked. Interacts with CLGN and ERO1A. N-glycosylated. In terms of tissue distribution, testis-specific (at protein level).

It localises to the endoplasmic reticulum. Probable redox-inactive chaperone involved in spermatogenesis. The protein is Protein disulfide-isomerase-like protein of the testis (Pdilt) of Mus musculus (Mouse).